A 545-amino-acid polypeptide reads, in one-letter code: Thermosome subunit alpha (545 aa).

This sequence belongs to the TCP-1 chaperonin family. In terms of assembly, forms a Heterooligomeric complex of two stacked eight-membered rings.

Molecular chaperone; binds unfolded polypeptides in vitro, and has a weak ATPase activity. This Archaeoglobus fulgidus (strain ATCC 49558 / DSM 4304 / JCM 9628 / NBRC 100126 / VC-16) protein is Thermosome subunit alpha (thsA).